The chain runs to 394 residues: Elongation factor Tu (394 aa).

One can recognise a tr-type G domain in the interval 10–204 (KPHVNVGTIG…ALDTYIPEPE (195 aa)). A G1 region spans residues 19-26 (GHVDHGKT). Position 19–26 (19–26 (GHVDHGKT)) interacts with GTP. T26 lines the Mg(2+) pocket. The G2 stretch occupies residues 60–64 (GITIN). Residues 81–84 (DCPG) form a G3 region. Residues 81 to 85 (DCPGH) and 136 to 139 (NKCD) each bind GTP. The segment at 136–139 (NKCD) is G4. A G5 region spans residues 174-176 (SAL).

It belongs to the TRAFAC class translation factor GTPase superfamily. Classic translation factor GTPase family. EF-Tu/EF-1A subfamily. In terms of assembly, monomer.

The protein resides in the cytoplasm. It carries out the reaction GTP + H2O = GDP + phosphate + H(+). Its function is as follows. GTP hydrolase that promotes the GTP-dependent binding of aminoacyl-tRNA to the A-site of ribosomes during protein biosynthesis. This is Elongation factor Tu from Shewanella pealeana (strain ATCC 700345 / ANG-SQ1).